Here is a 96-residue protein sequence, read N- to C-terminus: Glycine-rich protein DC7.1 (96 aa).

The signal sequence occupies residues Met1–Ala25. Residues Ser29 to Gly66 form a disordered region. Tandem repeats lie at residues His42–His50 and His61–His67. The 2 approximate repeats of H-H-G(4,6)-H stretch occupies residues His42–His67. Residues His43–Gly66 show a composition bias toward gly residues.

Belongs to the GRP family.

In terms of biological role, may be connected with the initiation of embryogenesis or with the metabolic changes produced by the removal of auxins. The chain is Glycine-rich protein DC7.1 from Daucus carota (Wild carrot).